Consider the following 209-residue polypeptide: Uracil phosphoribosyltransferase (209 aa).

5-phospho-alpha-D-ribose 1-diphosphate is bound by residues R79, R104, and 131 to 139 (DPMLATGGS). Uracil-binding positions include I194 and 199 to 201 (GDA). A 5-phospho-alpha-D-ribose 1-diphosphate-binding site is contributed by D200.

The protein belongs to the UPRTase family. It depends on Mg(2+) as a cofactor.

The enzyme catalyses UMP + diphosphate = 5-phospho-alpha-D-ribose 1-diphosphate + uracil. The protein operates within pyrimidine metabolism; UMP biosynthesis via salvage pathway; UMP from uracil: step 1/1. Allosterically activated by GTP. Catalyzes the conversion of uracil and 5-phospho-alpha-D-ribose 1-diphosphate (PRPP) to UMP and diphosphate. This is Uracil phosphoribosyltransferase from Streptococcus pyogenes serotype M1.